The chain runs to 674 residues: Collagen alpha-1(X) chain (674 aa).

An N-terminal signal peptide occupies residues 1-18; sequence MLPQTALLLLMSLNLVHG. The tract at residues 19-56 is nonhelical region (NC2); the sequence is VFYTERYQTPTGIKGPPSNTKTQFFIPYAIKGKGVSLR. The tract at residues 54–521 is disordered; the sequence is SLRGEQGIPG…PPGPPGQVAL (468 aa). A triple-helical region region spans residues 57–519; it reads GEQGIPGPPG…PGPPGPPGQV (463 aa). Positions 106–116 are enriched in low complexity; sequence GKPGLPGLPGK. Residues 137–147 show a composition bias toward pro residues; sequence PRGPPGPPGIP. Cys-194 and Cys-197 are disulfide-bonded. Pro residues predominate over residues 207-217; it reads PQGPTGPPGPP. Composition is skewed to low complexity over residues 277–293, 303–312, 393–403, and 441–453; these read IPGMKGQPGAPGTAGLP, LPGLKGQRGP, EPGLNGPKGNP, and PRGVPGIPGTRGP. Residues Pro-460 and Pro-463 each carry the 4-hydroxyproline modification. Over residues 506-516 the composition is skewed to pro residues; that stretch reads LPGPPGPPGPP. The nonhelical region (NC1) stretch occupies residues 520 to 674; it reads ALPEDFVKAG…SFSGFLVAPM (155 aa). The C1q domain maps to 541-674; the sequence is TGMPVSAFTV…SFSGFLVAPM (134 aa). Positions 620, 621, 627, and 628 each coordinate Ca(2+).

In terms of assembly, homotrimer. Hydroxylation on proline residues within the sequence motif, GXPG, is most likely to be 4-hydroxy as this fits the requirement for 4-hydroxylation in vertebrates.

It is found in the secreted. It localises to the extracellular space. The protein resides in the extracellular matrix. Functionally, type X collagen is a product of hypertrophic chondrocytes and has been localized to presumptive mineralization zones of hyaline cartilage. The chain is Collagen alpha-1(X) chain (COL10A1) from Bos taurus (Bovine).